The sequence spans 312 residues: DNA-directed RNA polymerase subunit alpha (312 aa).

Residues Met1–Thr229 are alpha N-terminal domain (alpha-NTD). Residues Ser241–Ala312 form an alpha C-terminal domain (alpha-CTD) region.

It belongs to the RNA polymerase alpha chain family. In cyanobacteria the RNAP catalytic core is composed of 2 alpha, 1 beta, 1 beta', 1 gamma and 1 omega subunit. When a sigma factor is associated with the core the holoenzyme is formed, which can initiate transcription.

It catalyses the reaction RNA(n) + a ribonucleoside 5'-triphosphate = RNA(n+1) + diphosphate. Its function is as follows. DNA-dependent RNA polymerase catalyzes the transcription of DNA into RNA using the four ribonucleoside triphosphates as substrates. The sequence is that of DNA-directed RNA polymerase subunit alpha from Synechococcus sp. (strain RCC307).